A 901-amino-acid polypeptide reads, in one-letter code: Probable dipeptidyl-aminopeptidase B (901 aa).

Residues 1–22 show a composition bias toward low complexity; that stretch reads MSSPRPSTSSTSSDSGLSVDTT. Residues 1–67 form a disordered region; the sequence is MSSPRPSTSS…EPFLPSAKKQ (67 aa). Residues 1-76 are Cytoplasmic-facing; that stretch reads MSSPRPSTSS…QAASGSRTSR (76 aa). A helical; Signal-anchor for type II membrane protein transmembrane segment spans residues 77-97; sequence LIWGLVILCVAGWLWGLVLFV. At 98–901 the chain is on the vacuolar side; it reads TQNRSAQQSV…VKRSLPMLVK (804 aa). N-linked (GlcNAc...) asparagine glycosylation is found at Asn334 and Asn625. The active-site Charge relay system is the Ser739. Residue Asn793 is glycosylated (N-linked (GlcNAc...) asparagine). Active-site charge relay system residues include Asp816 and His849.

The protein belongs to the peptidase S9B family.

It is found in the vacuole membrane. It carries out the reaction Release of an N-terminal dipeptide, Xaa-Yaa-|-Zaa-, from a polypeptide, preferentially when Yaa is Pro, provided Zaa is neither Pro nor hydroxyproline.. Type IV dipeptidyl-peptidase which removes N-terminal dipeptides sequentially from polypeptides having unsubstituted N-termini provided that the penultimate residue is proline. The chain is Probable dipeptidyl-aminopeptidase B (dapB) from Aspergillus niger (strain ATCC MYA-4892 / CBS 513.88 / FGSC A1513).